Reading from the N-terminus, the 145-residue chain is Acidic phospholipase A2 1 (145 aa).

The first 21 residues, 1–21, serve as a signal peptide directing secretion; it reads MYPAHLLVLLAVCVSLLGATA. A propeptide spanning residues 22–27 is cleaved from the precursor; it reads IPPLPL. Cystine bridges form between Cys-38/Cys-98, Cys-54/Cys-144, Cys-56/Cys-72, Cys-71/Cys-125, Cys-78/Cys-118, Cys-87/Cys-111, and Cys-105/Cys-116. Residues Tyr-55, Gly-57, and Gly-59 each coordinate Ca(2+). His-75 is a catalytic residue. Asp-76 is a Ca(2+) binding site. Asp-119 is an active-site residue.

This sequence belongs to the phospholipase A2 family. Group I subfamily. D49 sub-subfamily. Monomer. Requires Ca(2+) as cofactor. In terms of tissue distribution, expressed by the venom gland.

It is found in the secreted. It catalyses the reaction a 1,2-diacyl-sn-glycero-3-phosphocholine + H2O = a 1-acyl-sn-glycero-3-phosphocholine + a fatty acid + H(+). Functionally, PLA2 catalyzes the calcium-dependent hydrolysis of the 2-acyl groups in 3-sn-phosphoglycerides. This chain is Acidic phospholipase A2 1, found in Laticauda semifasciata (Black-banded sea krait).